A 158-amino-acid chain; its full sequence is GTP-dependent dephospho-CoA kinase (158 aa).

GTP-binding residues include Asp35, Val36, Asp54, Lys56, Glu109, and Asp132.

Belongs to the GTP-dependent DPCK family.

The enzyme catalyses 3'-dephospho-CoA + GTP = GDP + CoA + H(+). It functions in the pathway cofactor biosynthesis; coenzyme A biosynthesis. Its function is as follows. Catalyzes the GTP-dependent phosphorylation of the 3'-hydroxyl group of dephosphocoenzyme A to form coenzyme A (CoA). The chain is GTP-dependent dephospho-CoA kinase from Methanococcus maripaludis (strain DSM 14266 / JCM 13030 / NBRC 101832 / S2 / LL).